The sequence spans 345 residues: Uroporphyrinogen decarboxylase (345 aa).

Substrate contacts are provided by residues 24–28 (RQAGR), Asp74, Tyr150, Ser205, and His318.

This sequence belongs to the uroporphyrinogen decarboxylase family. As to quaternary structure, homodimer.

Its subcellular location is the cytoplasm. The enzyme catalyses uroporphyrinogen III + 4 H(+) = coproporphyrinogen III + 4 CO2. It participates in porphyrin-containing compound metabolism; protoporphyrin-IX biosynthesis; coproporphyrinogen-III from 5-aminolevulinate: step 4/4. Its function is as follows. Catalyzes the decarboxylation of four acetate groups of uroporphyrinogen-III to yield coproporphyrinogen-III. This Dichelobacter nodosus (strain VCS1703A) protein is Uroporphyrinogen decarboxylase.